The sequence spans 204 residues: VQ motif-containing protein 13 (204 aa).

Over residues 1-12 (MEKSPRYRDKAK) the composition is skewed to basic and acidic residues. A disordered region spans residues 1–26 (MEKSPRYRDKAKNLLPSPSSCTTTPT). A compositionally biased stretch (low complexity) spans 16–26 (PSPSSCTTTPT). Position 17 is a phosphoserine (S17). Residues 46–55 (FKQVVQLLTG) carry the VQ motif. Positions 56 to 90 (IPKNPTHQPDPRFPPFHSIPPIKAVTNKKQSSSFR) are disordered. Phosphoserine occurs at positions 73 and 128. The residue at position 131 (T131) is a Phosphothreonine. A disordered region spans residues 133 to 204 (LMSDPFYRPG…HSPAPSPHDH (72 aa)). A compositionally biased stretch (low complexity) spans 143-152 (SFSQSPSDSK). 2 positions are modified to phosphoserine: S147 and S173. T177 and T192 each carry phosphothreonine. A phosphoserine mark is found at S196 and S200.

Phosphorylated on serine and threonine residues by MPK6.

It is found in the nucleus. Its function is as follows. May modulate WRKY transcription factor activities. The protein is VQ motif-containing protein 13 of Arabidopsis thaliana (Mouse-ear cress).